Reading from the N-terminus, the 95-residue chain is Ragulator complex protein LAMTOR4 homolog (95 aa).

Belongs to the LAMTOR4 family. As to quaternary structure, part of the Ragulator complex.

It localises to the lysosome. Its function is as follows. Regulator of the TOR pathway, a signaling cascade that promotes cell growth in response to growth factors, energy levels, and amino acids. As part of the Ragulator complex, may activate the TOR signaling cascade in response to amino acids. The sequence is that of Ragulator complex protein LAMTOR4 homolog from Nematostella vectensis (Starlet sea anemone).